Here is a 338-residue protein sequence, read N- to C-terminus: Fructose-1,6-bisphosphatase 1 (338 aa).

N-acetylalanine is present on Ala2. Residues 18-22 (VMEEG) and 28-32 (TGEMT) contribute to the AMP site. Positions 69 and 98 each coordinate Mg(2+). Position 113-114 (113-114 (KY)) interacts with AMP. Mg(2+) is bound by residues Asp119, Leu121, and Asp122. Residue 122-125 (DGSS) participates in substrate binding. Arg141 provides a ligand contact to AMP. Position 151 is an N6-succinyllysine (Lys151). Substrate-binding positions include 213-216 (NEGY), 244-249 (RYVGSM), Tyr265, and 275-277 (KLR). Residues Tyr216, Tyr245, and Tyr265 each carry the phosphotyrosine modification. Glu281 contacts Mg(2+).

It belongs to the FBPase class 1 family. Homotetramer. The cofactor is Mg(2+).

The catalysed reaction is beta-D-fructose 1,6-bisphosphate + H2O = beta-D-fructose 6-phosphate + phosphate. It participates in carbohydrate biosynthesis; gluconeogenesis. With respect to regulation, subject to complex allosteric regulation. The enzyme can assume an active R-state, or an inactive T-state. Intermediate conformations may exist. AMP acts as an allosteric inhibitor. AMP binding affects the turnover of bound substrate and not the affinity for substrate. Fructose 2,6-bisphosphate acts as a competitive inhibitor. Fructose 2,6-bisphosphate and AMP have synergistic effects. Functionally, catalyzes the hydrolysis of fructose 1,6-bisphosphate to fructose 6-phosphate in the presence of divalent cations, acting as a rate-limiting enzyme in gluconeogenesis. Plays a role in regulating glucose sensing and insulin secretion of pancreatic beta-cells. Appears to modulate glycerol gluconeogenesis in liver. Important regulator of appetite and adiposity; increased expression of the protein in liver after nutrient excess increases circulating satiety hormones and reduces appetite-stimulating neuropeptides and thus seems to provide a feedback mechanism to limit weight gain. This is Fructose-1,6-bisphosphatase 1 (FBP1) from Oryctolagus cuniculus (Rabbit).